Consider the following 590-residue polypeptide: Kinetochore protein ndc-80 (590 aa).

Coiled-coil stretches lie at residues 269 to 342 (KGNE…KQIH) and 450 to 525 (ELET…MKLD).

Belongs to the NDC80/HEC1 family. Component of the NDC80 complex, which is composed of at least ndc-80 and him-10. The NDC80 complex interacts with knl-1. Interacts with the RZZ complex components rod-1 (via N-terminus) and zwl-1.

It is found in the nucleus. Its subcellular location is the chromosome. The protein resides in the centromere. The protein localises to the kinetochore. It localises to the cytoplasm. It is found in the cytoskeleton. Acts as a component of the essential kinetochore-associated ndc-80 complex, which is required for chromosome segregation in mitosis and meiosis and spindle checkpoint activity. Plays a role in kinetochore assembly and recruits the checkpoint protein mdf-2 and the spindly-like protein spdl-1 to unattached kinetochores. Mediates the formation of end-on kinetochore-microtubule attachments through recruitment of spdl-1. The ndc-80 complex synergistically enhances the affinity of the ska-1 complex for microtubules and may allow the ndc-80 complex to track depolymerizing microtubules. The polypeptide is Kinetochore protein ndc-80 (ndc-80) (Caenorhabditis elegans).